The following is a 1865-amino-acid chain: MAGLQLVTPASSPMGPFFGLPWQQEAIHDNIYTPRKYQVELLEAALEHNTIVCLNTGSGKTFIAVLLIKELSHQIRGENGKRTVFLVNAASSVAQQASTVRTHSDLQVGDYMSEDMTSWPEEMWNREMIENQVLVMTCHIFLHVLKNGVLPLSKINLLVFDECHLAITGHPYREIMKICEGCPSCPRILGLTASILNGKCDPCDLEEKIQNLEKILQSNAETATDLVVLDRYASQPREEVLDCGQYQDQSGLSERLLNELDEALNFLNDCNLSVHREDRDPTFISKQVLNDCRAVLTVLGPWCADKAAGIMVRELQKYIKHEQEELNRKFLLFTDTILRKIHALCEEHFSPASLDLKFVTPKVIRLLEILHEYKPFERQQFESVEWYNNRNQDNYVSWSDSEDDDEDEEAEAKEKTEANFPSPFTNILCGIIFVERRYTAVVLNRLIKEAGKQDPELAYISSNFITGHSIGKNQPRNKQMEVEFRKQEEVLRKFRAHETNLLIATSIVEEGVDIPKCNLVVRFDLPTEYRSYVQSKGRARAPVSNYIMLADSERTKTFQEDLKTYKAIEKILRNKCSKSAECNDFELEPVTDDDNVLPPYVLRSEDGGPRVTMNTAIGHVNRYCARLPSDPFTHLAPKCKTVEMNTGGYRSTLFLPINSPLRVPVTGPVMNCARLAEKAVALLCCEKLHKIGELDDHLMPVGKETVKYEEELDLHDEEETSVPGRPGSTKRRQCSPKAIPECLRGCYPVPEQPCYLYVIGMVLTTPLPDELNFRRRKLYPPEDTTRCFGILTAKPIPRIPHFPVYTRSGEVTISIELQKSGFSLSAEQLELITRLHQYIFSHILRLEKPALEFKPVEADSAYCVLPLNIVEDSNTLDLDFKFMEDIEKSEARIGIPNTQYTKQNPFIFKLEDYQDAVIIPRYRNFDQPHRFYVADVYTDLTPLSKFPSPEYETFAEYYKTKYNLDLSNVNQPLLDVDHTSSRLNLLTPRHLNQKGKALPLSSAEKRKAKWESLQNKQILVPELCAIHPIPASLWRKAVCLPSILYRLHCLLTAEELRSQTAIDAGVGAQTLPPDFRYPNLDFGWKKSIDSKSFISCPSACMEEDDDHCKLGTSSDSNHTAPESCSMEVSQPPEGAPNTPDEKLETLTLPVTDLNKDCFPNLPNGTQADSDDLPHRSDVCQCSQLGPLERDLSTQTTTSVSVRPSPAGEPQPWPSDECTGRSSDLCDPHVKKPTSKHCPKSETATSTPAPSETSSEDCRSACAGPAWDSPKTLGPNPGLILQALTLSNASDGFNLERLEMLGDSFLKHAITTYLFCTYPDAHEGRLSYMRSKKVSNCNLYRLGKKKGLPSRMVVSIFDPPVNWLPPGYVVNQDKSSTDKWDSDENKDLANGKASDDEDEDDDDEPEEAEVEPSKEDVNVEDDLEYYYEHIRFIDSMLIGSGAFGKKISLQPTDPGYEWKAPKKAHNSHFSPDGGADEFDYSSWDAMCYLDPSKAGEEDDFVVGFWNPSEENCGTDIGKQSISYDLHTEQCIADKSIADCVEALLGCYLTSCGERAAQLFLCSLGLKVLPPEKQSSGGSAELQYGWLKIPPRCMFEHPDAERTLNHLISGFLNFESKINYTFKNKAYLLQAFTHASYHYNTITDCYQRLEFLGDAILDYLITKHLYEDPRQHSPGVLTDLRSALVNNTIFASLAVKYDYHKYFKAVSPELFHVIDDFVQFQLEKNEMQGMDSELRRSEEDEEKEEDIEVPKAMGDIFESLAGAIYMDSGMSLETVWQVYYPMMRPLIEKFSANVPRSPVRELLEMEPETAKFSPAERTYDGKVRVTVEVVGKGKFKGVGRSYRIAKSAAARRALRSLKANQPQVQNN.

The 173-residue stretch at 41 to 213 folds into the Helicase ATP-binding domain; it reads LLEAALEHNT…DLEEKIQNLE (173 aa). 54–61 contacts ATP; sequence LNTGSGKT. A DECH box motif is present at residues 161–164; that stretch reads DECH. A disordered region spans residues 397 to 417; that stretch reads SWSDSEDDDEDEEAEAKEKTE. Residues 400 to 411 show a composition bias toward acidic residues; it reads DSEDDDEDEEAE. Residues 419–588 enclose the Helicase C-terminal domain; it reads NFPSPFTNIL…SAECNDFELE (170 aa). Residues 616–708 enclose the Dicer dsRNA-binding fold domain; it reads AIGHVNRYCA…MPVGKETVKY (93 aa). Residues 713–732 form a disordered region; it reads DLHDEEETSVPGRPGSTKRR. Positions 881-1028 constitute a PAZ domain; it reads KFMEDIEKSE…LVPELCAIHP (148 aa). Polar residues-rich tracts occupy residues 1111–1128 and 1192–1201; these read GTSS…SMEV and STQTTTSVSV. Disordered stretches follow at residues 1111 to 1142 and 1190 to 1259; these read GTSS…PDEK and DLST…DCRS. The span at 1240-1252 shows a compositional bias: low complexity; that stretch reads SETATSTPAPSET. Positions 1262–1385 constitute an RNase III 1 domain; the sequence is AGPAWDSPKT…TDKWDSDENK (124 aa). 3 residues coordinate Mg(2+): Glu1298, Asp1377, and Asp1380. Residues 1373–1417 are disordered; sequence KSSTDKWDSDENKDLANGKASDDEDEDDDDEPEEAEVEPSKEDVN. Basic and acidic residues predominate over residues 1374 to 1388; the sequence is SSTDKWDSDENKDLA. Acidic residues predominate over residues 1394–1409; that stretch reads DDEDEDDDDEPEEAEV. The region spanning 1609 to 1767 is the RNase III 2 domain; that stretch reads FLNFESKINY…LAGAIYMDSG (159 aa). 3 residues coordinate Mg(2+): Glu1648, Asp1753, and Glu1756. One can recognise a DRBM domain in the interval 1792-1857; it reads VPRSPVRELL…ARRALRSLKA (66 aa).

This sequence belongs to the helicase family. Dicer subfamily. Component of the RISC loading complex (RLC), or micro-RNA (miRNA) loading complex (miRLC), which is composed of dicer1, ago2 and tarbp2; dicer1 and tarbp2 are required to process precursor miRNAs (pre-miRNAs) to mature miRNAs and then load them onto ago2. Note that the trimeric RLC/miRLC is also referred to as RISC. Requires Mg(2+) as cofactor. Mn(2+) serves as cofactor.

The protein resides in the cytoplasm. The enzyme catalyses Endonucleolytic cleavage to 5'-phosphomonoester.. In terms of biological role, double-stranded RNA (dsRNA) endoribonuclease playing a central role in short dsRNA-mediated post-transcriptional gene silencing. Cleaves naturally occurring long dsRNAs and short hairpin pre-microRNAs (miRNA) into fragments of twenty-one to twenty-three nucleotides with 3' overhang of two nucleotides, producing respectively short interfering RNAs (siRNA) and mature microRNAs. SiRNAs and miRNAs serve as guide to direct the RNA-induced silencing complex (RISC) to complementary RNAs to degrade them or prevent their translation. Gene silencing mediated by siRNAs, also called RNA interference, controls the elimination of transcripts from mobile and repetitive DNA elements of the genome but also the degradation of exogenous RNA of viral origin for instance. The miRNA pathway on the other side is a mean to specifically regulate the expression of target genes. This is Endoribonuclease Dicer (dicer1) from Danio rerio (Zebrafish).